A 98-amino-acid chain; its full sequence is MNEERLLKVLVGPHVSEKATVLADAANQHVFKVAPDATRGEIKAAVEKFFEVQVSSVRVVNMKGKRKRFGRFEGRRNNWKKAYVTLAAGQDIALAGSE.

Belongs to the universal ribosomal protein uL23 family. As to quaternary structure, part of the 50S ribosomal subunit. Contacts protein L29, and trigger factor when it is bound to the ribosome.

Its function is as follows. One of the early assembly proteins it binds 23S rRNA. One of the proteins that surrounds the polypeptide exit tunnel on the outside of the ribosome. Forms the main docking site for trigger factor binding to the ribosome. In Thioalkalivibrio sulfidiphilus (strain HL-EbGR7), this protein is Large ribosomal subunit protein uL23.